Consider the following 400-residue polypeptide: Egl nine homolog 1 (400 aa).

Residue Ala2 is modified to N-acetylalanine. Residues Gly6–Tyr20 form a required for nuclear export region. Position 12 is a phosphoserine (Ser12). Zn(2+)-binding residues include Cys21, Cys24, Cys33, Cys36, Cys42, His46, His54, and Cys58. Residues Cys21–Cys58 form an MYND-type; atypical zinc finger. Residues Glu62–Arg74 show a composition bias toward low complexity. Residues Glu62–Gln161 form a disordered region. A Phosphoserine modification is found at Ser114. The segment covering Ala142 to Arg157 has biased composition (gly residues). 2 positions are modified to S-nitrosocysteine: Cys178 and Cys185. The beta(2)beta(3) 'finger-like' loop stretch occupies residues Val218–Ile228. Positions Gly271–Asp369 constitute a Fe2OG dioxygenase domain. The residue at position 279 (Cys279) is an S-nitrosocysteine. Positions 290 and 292 each coordinate Fe cation. An S-nitrosocysteine mark is found at Cys300 and Cys303. A Fe cation-binding site is contributed by His351. Arg360 contributes to the 2-oxoglutarate binding site.

In terms of assembly, monomer. Interacts with ING4; the interaction inhibits the hydroxylation of HIF alpha proteins. Interacts with PTGES3 (via PXLE motif); thereby recruiting EGLN1 to the HSP90 pathway to facilitate HIF alpha proteins hydroxylation. Interacts with LIMD1. Found in a complex composed of LIMD1, VHL, EGLN1/PHD2, ELOB and CUL2. Interacts with EPAS1. Interacts with CBFA2T3 and HIF1A. The cofactor is Fe(2+). It depends on L-ascorbate as a cofactor. Post-translationally, S-nitrosylation inhibits the enzyme activity up to 60% under aerobic conditions. Chelation of Fe(2+) has no effect on the S-nitrosylation. It is uncertain whether nitrosylation occurs on Cys-300 or Cys-303. In terms of tissue distribution, expressed in heart, brain liver, skeletal muscle and kidney. Low levels were detected in the lung. Constitutively expressed during differentiation of C2C12 skeletal myocytes.

It localises to the cytoplasm. The protein resides in the nucleus. The catalysed reaction is L-prolyl-[hypoxia-inducible factor alpha subunit] + 2-oxoglutarate + O2 = trans-4-hydroxy-L-prolyl-[hypoxia-inducible factor alpha subunit] + succinate + CO2. In terms of biological role, cellular oxygen sensor that catalyzes, under normoxic conditions, the post-translational formation of 4-hydroxyproline in hypoxia-inducible factor (HIF) alpha proteins. Hydroxylates a specific proline found in each of the oxygen-dependent degradation (ODD) domains (N-terminal, NODD, and C-terminal, CODD) of HIF1A. Also hydroxylates HIF2A. Has a preference for the CODD site for both HIF1A and HIF1B. Hydroxylated HIFs are then targeted for proteasomal degradation via the von Hippel-Lindau ubiquitination complex. Under hypoxic conditions, the hydroxylation reaction is attenuated allowing HIFs to escape degradation resulting in their translocation to the nucleus, heterodimerization with HIF1B, and increased expression of hypoxy-inducible genes. EGLN1 is the most important isozyme under normoxia and, through regulating the stability of HIF1, involved in various hypoxia-influenced processes such as angiogenesis in retinal and cardiac functionality. Target proteins are preferentially recognized via a LXXLAP motif. The sequence is that of Egl nine homolog 1 (Egln1) from Mus musculus (Mouse).